Reading from the N-terminus, the 63-residue chain is Translational regulator CsrA (63 aa).

The protein belongs to the CsrA/RsmA family. In terms of assembly, homodimer; the beta-strands of each monomer intercalate to form a hydrophobic core, while the alpha-helices form wings that extend away from the core.

The protein localises to the cytoplasm. Its function is as follows. A key translational regulator that binds mRNA to regulate translation initiation and/or mRNA stability. Mediates global changes in gene expression, shifting from rapid growth to stress survival by linking envelope stress, the stringent response and the catabolite repression systems. Usually binds in the 5'-UTR; binding at or near the Shine-Dalgarno sequence prevents ribosome-binding, repressing translation, binding elsewhere in the 5'-UTR can activate translation and/or stabilize the mRNA. Its function is antagonized by small RNA(s). The protein is Translational regulator CsrA of Haemophilus influenzae (strain 86-028NP).